A 222-amino-acid chain; its full sequence is PKHD-type hydroxylase Syncc9605_1577 (222 aa).

One can recognise a Fe2OG dioxygenase domain in the interval 80–175; the sequence is KVHSLLVSRS…RYVCVGWIES (96 aa). Fe cation-binding residues include His-98, Asp-100, and His-156. Arg-166 contacts 2-oxoglutarate.

It depends on Fe(2+) as a cofactor. L-ascorbate is required as a cofactor.

This Synechococcus sp. (strain CC9605) protein is PKHD-type hydroxylase Syncc9605_1577.